The following is a 139-amino-acid chain: Small ribosomal subunit protein bS16 (139 aa).

The tract at residues 84–139 (KGEPAPAPLLQPAEKAARPSFEAIGGEDEGKGEAITQKKKADKRDEAAAESSASEA) is disordered.

The protein belongs to the bacterial ribosomal protein bS16 family.

This chain is Small ribosomal subunit protein bS16, found in Streptomyces lividans.